The chain runs to 427 residues: Serine hydroxymethyltransferase (427 aa).

Residues Leu122 and 126 to 128 contribute to the (6S)-5,6,7,8-tetrahydrofolate site; that span reads GHL. Lys231 carries the N6-(pyridoxal phosphate)lysine modification. 355–357 contributes to the (6S)-5,6,7,8-tetrahydrofolate binding site; it reads SPF.

It belongs to the SHMT family. Homodimer. Pyridoxal 5'-phosphate is required as a cofactor.

The protein resides in the cytoplasm. The catalysed reaction is (6R)-5,10-methylene-5,6,7,8-tetrahydrofolate + glycine + H2O = (6S)-5,6,7,8-tetrahydrofolate + L-serine. The protein operates within one-carbon metabolism; tetrahydrofolate interconversion. It participates in amino-acid biosynthesis; glycine biosynthesis; glycine from L-serine: step 1/1. Functionally, catalyzes the reversible interconversion of serine and glycine with tetrahydrofolate (THF) serving as the one-carbon carrier. This reaction serves as the major source of one-carbon groups required for the biosynthesis of purines, thymidylate, methionine, and other important biomolecules. Also exhibits THF-independent aldolase activity toward beta-hydroxyamino acids, producing glycine and aldehydes, via a retro-aldol mechanism. The protein is Serine hydroxymethyltransferase of Nostoc sp. (strain PCC 7120 / SAG 25.82 / UTEX 2576).